Reading from the N-terminus, the 245-residue chain is 8-amino-3,8-dideoxy-manno-octulosonate cytidylyltransferase (245 aa).

Belongs to the KdsB family.

It localises to the cytoplasm. The catalysed reaction is 8-amino-3,8-dideoxy-alpha-D-manno-octulosonate + CTP = CMP-8-amino-3,8-dideoxy-alpha-D-manno-oct-2-ulosonate + diphosphate. Its pathway is bacterial outer membrane biogenesis; lipopolysaccharide biosynthesis. Its function is as follows. Activates KDO8N (a required 8-carbon sugar) for incorporation into bacterial lipopolysaccharide in the Shewanella genus. The sequence is that of 8-amino-3,8-dideoxy-manno-octulosonate cytidylyltransferase from Shewanella sp. (strain MR-7).